The following is a 248-amino-acid chain: 3-deoxy-manno-octulosonate cytidylyltransferase (248 aa).

This sequence belongs to the KdsB family.

Its subcellular location is the cytoplasm. The enzyme catalyses 3-deoxy-alpha-D-manno-oct-2-ulosonate + CTP = CMP-3-deoxy-beta-D-manno-octulosonate + diphosphate. It functions in the pathway nucleotide-sugar biosynthesis; CMP-3-deoxy-D-manno-octulosonate biosynthesis; CMP-3-deoxy-D-manno-octulosonate from 3-deoxy-D-manno-octulosonate and CTP: step 1/1. It participates in bacterial outer membrane biogenesis; lipopolysaccharide biosynthesis. In terms of biological role, activates KDO (a required 8-carbon sugar) for incorporation into bacterial lipopolysaccharide in Gram-negative bacteria. The protein is 3-deoxy-manno-octulosonate cytidylyltransferase of Salmonella arizonae (strain ATCC BAA-731 / CDC346-86 / RSK2980).